Here is a 90-residue protein sequence, read N- to C-terminus: Large ribosomal subunit protein eL31 (90 aa).

This sequence belongs to the eukaryotic ribosomal protein eL31 family.

This is Large ribosomal subunit protein eL31 from Natronomonas pharaonis (strain ATCC 35678 / DSM 2160 / CIP 103997 / JCM 8858 / NBRC 14720 / NCIMB 2260 / Gabara) (Halobacterium pharaonis).